The chain runs to 606 residues: NADH-ubiquinone oxidoreductase chain 5 (606 aa).

A run of 14 helical transmembrane segments spans residues 1–21 (MNMF…PIIM), 43–63 (AFMI…ETII), 87–107 (MIFV…SMWY), 117–137 (FFKY…ANNM), 140–160 (LFIG…WWYG), 171–191 (AVLY…WFLL), 241–261 (TPVS…FLLI), 273–293 (IQTL…ICAL), 310–330 (LGLM…LHIC), 365–385 (VLPF…GMPF), 409–429 (LLIT…IMFF), 457–477 (LLIG…PTTI), 488–508 (MTAL…NLTT), and 582–602 (GLIK…LLIL).

It belongs to the complex I subunit 5 family. Core subunit of respiratory chain NADH dehydrogenase (Complex I) which is composed of 45 different subunits.

The protein resides in the mitochondrion inner membrane. It carries out the reaction a ubiquinone + NADH + 5 H(+)(in) = a ubiquinol + NAD(+) + 4 H(+)(out). Core subunit of the mitochondrial membrane respiratory chain NADH dehydrogenase (Complex I) which catalyzes electron transfer from NADH through the respiratory chain, using ubiquinone as an electron acceptor. Essential for the catalytic activity and assembly of complex I. The sequence is that of NADH-ubiquinone oxidoreductase chain 5 (MT-ND5) from Canis lupus (Gray wolf).